Reading from the N-terminus, the 204-residue chain is Thiamine-phosphate synthase (204 aa).

Residues 32-36 (QLRMK) and aspartate 64 each bind 4-amino-2-methyl-5-(diphosphooxymethyl)pyrimidine. 2 residues coordinate Mg(2+): aspartate 65 and aspartate 84. Threonine 103 serves as a coordination point for 4-amino-2-methyl-5-(diphosphooxymethyl)pyrimidine. Position 129–131 (129–131 (TTT)) interacts with 2-[(2R,5Z)-2-carboxy-4-methylthiazol-5(2H)-ylidene]ethyl phosphate. A 4-amino-2-methyl-5-(diphosphooxymethyl)pyrimidine-binding site is contributed by lysine 132. Residue glycine 165 coordinates 2-[(2R,5Z)-2-carboxy-4-methylthiazol-5(2H)-ylidene]ethyl phosphate.

This sequence belongs to the thiamine-phosphate synthase family. Mg(2+) is required as a cofactor.

The enzyme catalyses 2-[(2R,5Z)-2-carboxy-4-methylthiazol-5(2H)-ylidene]ethyl phosphate + 4-amino-2-methyl-5-(diphosphooxymethyl)pyrimidine + 2 H(+) = thiamine phosphate + CO2 + diphosphate. The catalysed reaction is 2-(2-carboxy-4-methylthiazol-5-yl)ethyl phosphate + 4-amino-2-methyl-5-(diphosphooxymethyl)pyrimidine + 2 H(+) = thiamine phosphate + CO2 + diphosphate. It carries out the reaction 4-methyl-5-(2-phosphooxyethyl)-thiazole + 4-amino-2-methyl-5-(diphosphooxymethyl)pyrimidine + H(+) = thiamine phosphate + diphosphate. It participates in cofactor biosynthesis; thiamine diphosphate biosynthesis; thiamine phosphate from 4-amino-2-methyl-5-diphosphomethylpyrimidine and 4-methyl-5-(2-phosphoethyl)-thiazole: step 1/1. Functionally, condenses 4-methyl-5-(beta-hydroxyethyl)thiazole monophosphate (THZ-P) and 2-methyl-4-amino-5-hydroxymethyl pyrimidine pyrophosphate (HMP-PP) to form thiamine monophosphate (TMP). This is Thiamine-phosphate synthase from Bacteroides fragilis (strain YCH46).